We begin with the raw amino-acid sequence, 1040 residues long: Alpha-mannosidase 2C1 (1040 aa).

Co(2+)-binding residues include H260, D262, D372, and H577. Residue D372 is the Nucleophile of the active site.

The protein belongs to the glycosyl hydrolase 38 family. Co(2+) serves as cofactor.

Its subcellular location is the cytoplasm. The catalysed reaction is Hydrolysis of terminal, non-reducing alpha-D-mannose residues in alpha-D-mannosides.. With respect to regulation, strongly inhibited by swainsonine. Also inhibited to a lesser extent by deoxymannojirimycin (DMM). Functionally, cleaves alpha 1,2-, alpha 1,3-, and alpha 1,6-linked mannose residues on cytoplasmic free oligosaccharides generated by N-glycoprotein degradation pathways. The polypeptide is Alpha-mannosidase 2C1 (MAN2C1) (Homo sapiens (Human)).